We begin with the raw amino-acid sequence, 122 residues long: MIQQESRLKVADNSGAKELLCIRVLGGTRRRYANVGDVIVCSVKSATPGGVVKKGEVVKAVVVRTVSTTRRKDGTYIKFDENAAVIIKDDKQMVGTRIFGPVTRELRDRDFMKIVSLAPEVL.

Belongs to the universal ribosomal protein uL14 family. As to quaternary structure, part of the 50S ribosomal subunit. Forms a cluster with proteins L3 and L19. In the 70S ribosome, L14 and L19 interact and together make contacts with the 16S rRNA in bridges B5 and B8.

Its function is as follows. Binds to 23S rRNA. Forms part of two intersubunit bridges in the 70S ribosome. This Alkaliphilus metalliredigens (strain QYMF) protein is Large ribosomal subunit protein uL14.